A 151-amino-acid polypeptide reads, in one-letter code: Endoribonuclease YbeY (151 aa).

Zn(2+) contacts are provided by histidine 113, histidine 117, and histidine 123.

It belongs to the endoribonuclease YbeY family. Requires Zn(2+) as cofactor.

The protein resides in the cytoplasm. Its function is as follows. Single strand-specific metallo-endoribonuclease involved in late-stage 70S ribosome quality control and in maturation of the 3' terminus of the 16S rRNA. This Polaromonas naphthalenivorans (strain CJ2) protein is Endoribonuclease YbeY.